The following is a 558-amino-acid chain: Glucose-6-phosphate isomerase (558 aa).

The Proton donor role is filled by E362. Catalysis depends on residues H393 and K523.

It belongs to the GPI family.

The protein localises to the cytoplasm. The enzyme catalyses alpha-D-glucose 6-phosphate = beta-D-fructose 6-phosphate. It functions in the pathway carbohydrate degradation; glycolysis; D-glyceraldehyde 3-phosphate and glycerone phosphate from D-glucose: step 2/4. The polypeptide is Glucose-6-phosphate isomerase (Pgi) (Drosophila melanogaster (Fruit fly)).